Reading from the N-terminus, the 241-residue chain is Probable transcriptional regulatory protein Maqu_2154 (241 aa).

The protein belongs to the TACO1 family.

The protein localises to the cytoplasm. The sequence is that of Probable transcriptional regulatory protein Maqu_2154 from Marinobacter nauticus (strain ATCC 700491 / DSM 11845 / VT8) (Marinobacter aquaeolei).